A 282-amino-acid chain; its full sequence is Transformer-2 protein homolog alpha (282 aa).

Residues 1–118 (MSDVEENNFE…TGSRANPDPN (118 aa)) are disordered. S2 carries the N-acetylserine modification. 2 positions are modified to phosphoserine: S2 and S14. T24 bears the Phosphothreonine mark. Basic residues predominate over residues 51 to 84 (RSRSKSRSRSRRHSHRRYTRSRSHSHSHRRRSRS). Phosphoserine occurs at positions 82, 84, and 86. At T88 the chain carries Phosphothreonine. The span at 92–110 (RRRRSRSHSPMSNRRRHTG) shows a compositional bias: basic residues. Residues S96 and S98 each carry the phosphoserine modification. Residues 119–197 (TCLGVFGLSL…RRIRVDYSIT (79 aa)) form the RRM domain. A Glycyl lysine isopeptide (Lys-Gly) (interchain with G-Cter in SUMO2) cross-link involves residue K198. Residues 198 to 225 (KRAHTPTPGIYMGRPTHSGGGGGGGGGG) form a linker region. Disordered regions lie at residues 201–245 (HTPT…YDRG) and 260–282 (SPSPYYSRYRSRSRSRSYSPRRY). Residues T202 and T204 each carry the phosphothreonine modification. The span at 215-230 (SGGGGGGGGGGGGGGG) shows a compositional bias: gly residues. Omega-N-methylarginine is present on R232. The span at 232–245 (RRRDSYYDRGYDRG) shows a compositional bias: basic and acidic residues. The residue at position 236 (S236) is a Phosphoserine. The segment covering 268-282 (YRSRSRSRSYSPRRY) has biased composition (basic residues).

The protein belongs to the splicing factor SR family. Binds to A3 enhancer proteins SRp75, SRp55, SRp40 and SRp30. Interacts with ILDR1 (via C-terminus) and ILDR2. Post-translationally, phosphorylated in the RS domains.

Its subcellular location is the nucleus. Its function is as follows. Sequence-specific RNA-binding protein which participates in the control of pre-mRNA splicing. The polypeptide is Transformer-2 protein homolog alpha (Homo sapiens (Human)).